A 685-amino-acid chain; its full sequence is Putative lipase ROG1 (685 aa).

S269 functions as the Charge relay system in the catalytic mechanism.

The protein belongs to the putative lipase ROG1 family.

The polypeptide is Putative lipase ROG1 (ROG1) (Saccharomyces cerevisiae (strain ATCC 204508 / S288c) (Baker's yeast)).